A 100-amino-acid polypeptide reads, in one-letter code: Urease subunit gamma (100 aa).

The protein belongs to the urease gamma subunit family. As to quaternary structure, heterotrimer of UreA (gamma), UreB (beta) and UreC (alpha) subunits. Three heterotrimers associate to form the active enzyme.

Its subcellular location is the cytoplasm. The enzyme catalyses urea + 2 H2O + H(+) = hydrogencarbonate + 2 NH4(+). The protein operates within nitrogen metabolism; urea degradation; CO(2) and NH(3) from urea (urease route): step 1/1. The polypeptide is Urease subunit gamma (Rhizobium meliloti (strain 1021) (Ensifer meliloti)).